A 193-amino-acid polypeptide reads, in one-letter code: MNLIPTVIEQTNRGERAYDIYSRLLKDRIIMLGSAIDDNVANSIVSQLLFLESQDPDKDIHLYINSPGGSITAGMAIYDTMQFIKPQVSTICIGMAASMGAFLLAAGEKGKRYALPNSEVMIHQPLGGAQGQATEIEIAAKRILFLREKLNQILADRTGQPLEVLQRDTDRDNFMTAEKALEYGLIDKIFTNR.

The Nucleophile role is filled by Ser98. His123 is an active-site residue.

It belongs to the peptidase S14 family. In terms of assembly, fourteen ClpP subunits assemble into 2 heptameric rings which stack back to back to give a disk-like structure with a central cavity, resembling the structure of eukaryotic proteasomes.

It is found in the cytoplasm. The enzyme catalyses Hydrolysis of proteins to small peptides in the presence of ATP and magnesium. alpha-casein is the usual test substrate. In the absence of ATP, only oligopeptides shorter than five residues are hydrolyzed (such as succinyl-Leu-Tyr-|-NHMec, and Leu-Tyr-Leu-|-Tyr-Trp, in which cleavage of the -Tyr-|-Leu- and -Tyr-|-Trp bonds also occurs).. Cleaves peptides in various proteins in a process that requires ATP hydrolysis. Has a chymotrypsin-like activity. Plays a major role in the degradation of misfolded proteins. In Bacillus cereus (strain ATCC 10987 / NRS 248), this protein is ATP-dependent Clp protease proteolytic subunit 2.